Reading from the N-terminus, the 275-residue chain is Diaminopimelate epimerase (275 aa).

Substrate-binding residues include Asn-12, Gln-45, and Asn-65. The active-site Proton donor is Cys-74. Residues 75–76 (GN), Asn-158, Asn-191, and 209–210 (ER) each bind substrate. The Proton acceptor role is filled by Cys-218. Substrate is bound at residue 219-220 (GT).

It belongs to the diaminopimelate epimerase family. As to quaternary structure, homodimer.

It is found in the cytoplasm. The catalysed reaction is (2S,6S)-2,6-diaminopimelate = meso-2,6-diaminopimelate. It functions in the pathway amino-acid biosynthesis; L-lysine biosynthesis via DAP pathway; DL-2,6-diaminopimelate from LL-2,6-diaminopimelate: step 1/1. In terms of biological role, catalyzes the stereoinversion of LL-2,6-diaminopimelate (L,L-DAP) to meso-diaminopimelate (meso-DAP), a precursor of L-lysine and an essential component of the bacterial peptidoglycan. The chain is Diaminopimelate epimerase from Shewanella baltica (strain OS223).